A 191-amino-acid polypeptide reads, in one-letter code: Fe/S biogenesis protein NfuA (191 aa).

The [4Fe-4S] cluster site is built by cysteine 149 and cysteine 152.

The protein belongs to the NfuA family. Homodimer. [4Fe-4S] cluster serves as cofactor.

Functionally, involved in iron-sulfur cluster biogenesis. Binds a 4Fe-4S cluster, can transfer this cluster to apoproteins, and thereby intervenes in the maturation of Fe/S proteins. Could also act as a scaffold/chaperone for damaged Fe/S proteins. In Salmonella choleraesuis (strain SC-B67), this protein is Fe/S biogenesis protein NfuA.